The chain runs to 317 residues: Protoheme IX farnesyltransferase (317 aa).

Transmembrane regions (helical) follow at residues 36-56 (VMVL…ATVN), 57-77 (PVIA…SGCL), 108-128 (LAFG…ASNW), 129-149 (LAAG…SMWL), 157-177 (IVIG…AVTG), 184-204 (LVLF…LALV), 230-247 (IVWY…PVWL), 251-273 (GWLY…VQVY), and 284-304 (AAMG…SALL).

It belongs to the UbiA prenyltransferase family. Protoheme IX farnesyltransferase subfamily.

The protein localises to the cell inner membrane. It carries out the reaction heme b + (2E,6E)-farnesyl diphosphate + H2O = Fe(II)-heme o + diphosphate. It participates in porphyrin-containing compound metabolism; heme O biosynthesis; heme O from protoheme: step 1/1. Its function is as follows. Converts heme B (protoheme IX) to heme O by substitution of the vinyl group on carbon 2 of heme B porphyrin ring with a hydroxyethyl farnesyl side group. In Methylorubrum populi (strain ATCC BAA-705 / NCIMB 13946 / BJ001) (Methylobacterium populi), this protein is Protoheme IX farnesyltransferase.